A 559-amino-acid chain; its full sequence is Nucleoprotein (559 aa).

The interval 53–235 (MRKEKRTDSD…ITQEQSQINI (183 aa)) is binding site for the cap structure m7GTP. Positions 378 and 380 each coordinate Mn(2+). Residues E388, C495, H498, and C519 each coordinate Zn(2+). D523 is a binding site for Mn(2+).

This sequence belongs to the arenaviridae nucleocapsid protein family. In terms of assembly, homomultimerizes to form the nucleocapsid. Binds to viral genomic RNA. Interacts with glycoprotein G2. Interacts with protein Z; this interaction probably directs the encapsidated genome to budding sites. Interacts with protein L; this interaction does not interfere with Z-L interaction. Interacts with host IKBKE (via Protein kinase domain); the interaction inhibits IKBKE kinase activity.

It is found in the virion. Its subcellular location is the host cytoplasm. Its function is as follows. Encapsidates the genome, protecting it from nucleases. The encapsidated genomic RNA is termed the nucleocapsid (NC). Serves as template for viral transcription and replication. The increased presence of protein N in host cell does not seem to trigger the switch from transcription to replication as observed in other negative strain RNA viruses. Through the interaction with host IKBKE, strongly inhibits the phosphorylation and nuclear translocation of host IRF3, a protein involved in interferon activation pathway, leading to the inhibition of interferon-beta and IRF3-dependent promoters activation. Also encodes a functional 3'-5' exoribonuclease that degrades preferentially dsRNA substrates and thereby participates in the suppression of interferon induction. In Sooretamys angouya (Paraguayan rice rat), this protein is Nucleoprotein.